We begin with the raw amino-acid sequence, 185 residues long: Large ribosomal subunit protein uL5 (185 aa).

It belongs to the universal ribosomal protein uL5 family. In terms of assembly, part of the 50S ribosomal subunit; part of the 5S rRNA/L5/L18/L25 subcomplex. Contacts the 5S rRNA and the P site tRNA. Forms a bridge to the 30S subunit in the 70S ribosome.

Functionally, this is one of the proteins that bind and probably mediate the attachment of the 5S RNA into the large ribosomal subunit, where it forms part of the central protuberance. In the 70S ribosome it contacts protein S13 of the 30S subunit (bridge B1b), connecting the 2 subunits; this bridge is implicated in subunit movement. Contacts the P site tRNA; the 5S rRNA and some of its associated proteins might help stabilize positioning of ribosome-bound tRNAs. This chain is Large ribosomal subunit protein uL5, found in Brucella abortus (strain 2308).